A 68-amino-acid polypeptide reads, in one-letter code: DNA-directed RNA polymerase subunit omega (68 aa).

Belongs to the RNA polymerase subunit omega family. As to quaternary structure, the RNAP catalytic core consists of 2 alpha, 1 beta, 1 beta' and 1 omega subunit. When a sigma factor is associated with the core the holoenzyme is formed, which can initiate transcription.

It carries out the reaction RNA(n) + a ribonucleoside 5'-triphosphate = RNA(n+1) + diphosphate. Promotes RNA polymerase assembly. Latches the N- and C-terminal regions of the beta' subunit thereby facilitating its interaction with the beta and alpha subunits. The protein is DNA-directed RNA polymerase subunit omega of Syntrophotalea carbinolica (strain DSM 2380 / NBRC 103641 / GraBd1) (Pelobacter carbinolicus).